The sequence spans 161 residues: Small ribosomal subunit protein uS9 (161 aa).

Belongs to the universal ribosomal protein uS9 family.

The polypeptide is Small ribosomal subunit protein uS9 (Bartonella bacilliformis (strain ATCC 35685 / KC583 / Herrer 020/F12,63)).